A 434-amino-acid polypeptide reads, in one-letter code: Putative D-alanyl-D-alanine carboxypeptidase (434 aa).

Residues 7–25 (YLSLLAVSCSVSAAKYPVL) traverse the membrane as a helical; Signal-anchor segment.

The protein belongs to the peptidase S12 family. YfeW subfamily.

It localises to the cell inner membrane. The enzyme catalyses Preferential cleavage: (Ac)2-L-Lys-D-Ala-|-D-Ala. Also transpeptidation of peptidyl-alanyl moieties that are N-acyl substituents of D-alanine.. This Escherichia coli O157:H7 protein is Putative D-alanyl-D-alanine carboxypeptidase.